We begin with the raw amino-acid sequence, 272 residues long: MMACHC-like protein (272 aa).

Substrate-binding positions include Asp121, 132–135 (ILMQ), and 146–148 (YYQ).

It belongs to the MMACHC family. It depends on FAD as a cofactor. Requires FMN as cofactor.

It is found in the cytoplasm. In terms of biological role, catalyzes the reductive dealkylation of cyanocobalamin to cob(II)alamin, using FAD or FMN as cofactor and NADPH as cosubstrate. Can also catalyze the glutathione-dependent reductive demethylation of methylcobalamin, and, with much lower efficiency, the glutathione-dependent reductive demethylation of adenosylcobalamin. Under anaerobic conditions cob(I)alamin is the first product; it is highly reactive and is converted to aquocob(II)alamin in the presence of oxygen. Binds cyanocobalamin, adenosylcobalamin, methylcobalamin and other, related vitamin B12 derivatives. This Caenorhabditis elegans protein is MMACHC-like protein (cblc-1).